Here is a 150-residue protein sequence, read N- to C-terminus: Ribonuclease K6 (150 aa).

The N-terminal stretch at 1 to 23 (MVLCFPLLLLLLVLWGPVCLLHA) is a signal peptide. The Proton acceptor role is filled by H38. 4 disulfide bridges follow: C46-C104, C60-C114, C78-C129, and C85-C92. The N-linked (GlcNAc...) asparagine glycan is linked to N55. Substrate contacts are provided by residues 61-65 (KHQNT) and K86. N100 carries N-linked (GlcNAc...) asparagine glycosylation. A substrate-binding site is contributed by R105. H145 (proton donor) is an active-site residue.

The protein belongs to the pancreatic ribonuclease family. As to quaternary structure, interacts (via N-terminus) with bacterial lipopolysaccharide (LPS).

The protein resides in the secreted. It localises to the lysosome. The protein localises to the cytoplasmic granule. Ribonuclease which shows a preference for the pyrimidines uridine and cytosine. Has potent antibacterial activity against a range of Gram-positive and Gram-negative bacteria, including P.aeruginosa, A.baumanii, M.luteus, S.aureus, E.faecalis, E.faecium, S.saprophyticus and E.coli. Causes loss of bacterial membrane integrity, and also promotes agglutination of Gram-negative bacteria. Probably contributes to urinary tract sterility. Bactericidal activity is independent of RNase activity. The polypeptide is Ribonuclease K6 (RNASE6) (Chlorocebus aethiops (Green monkey)).